A 380-amino-acid chain; its full sequence is UDP-3-O-acylglucosamine N-acyltransferase (380 aa).

H263 acts as the Proton acceptor in catalysis.

This sequence belongs to the transferase hexapeptide repeat family. LpxD subfamily. In terms of assembly, homotrimer.

The enzyme catalyses a UDP-3-O-[(3R)-3-hydroxyacyl]-alpha-D-glucosamine + a (3R)-hydroxyacyl-[ACP] = a UDP-2-N,3-O-bis[(3R)-3-hydroxyacyl]-alpha-D-glucosamine + holo-[ACP] + H(+). The protein operates within bacterial outer membrane biogenesis; LPS lipid A biosynthesis. Its function is as follows. Catalyzes the N-acylation of UDP-3-O-acylglucosamine using 3-hydroxyacyl-ACP as the acyl donor. Is involved in the biosynthesis of lipid A, a phosphorylated glycolipid that anchors the lipopolysaccharide to the outer membrane of the cell. The protein is UDP-3-O-acylglucosamine N-acyltransferase of Rhodopirellula baltica (strain DSM 10527 / NCIMB 13988 / SH1).